Reading from the N-terminus, the 87-residue chain is Small ribosomal subunit protein bS20 (87 aa).

Basic residues predominate over residues methionine 1–arginine 10. Residues methionine 1–alanine 27 form a disordered region.

The protein belongs to the bacterial ribosomal protein bS20 family.

Binds directly to 16S ribosomal RNA. The sequence is that of Small ribosomal subunit protein bS20 from Corynebacterium aurimucosum (strain ATCC 700975 / DSM 44827 / CIP 107346 / CN-1) (Corynebacterium nigricans).